An 83-amino-acid chain; its full sequence is MKASMYLALAGLVLLFVVGYASESEEKEFPRELLSKIFAVDDFKGEERGCKGFGDSCTPGKNECCPNYACSCKHKWCKVYLGK.

The first 21 residues, 1-21 (MKASMYLALAGLVLLFVVGYA), serve as a signal peptide directing secretion. Residues 22–48 (SESEEKEFPRELLSKIFAVDDFKGEER) constitute a propeptide that is removed on maturation. 3 disulfides stabilise this stretch: C50/C65, C57/C70, and C64/C77. The residue at position 81 (L81) is a Leucine amide.

The protein belongs to the neurotoxin 10 (Hwtx-1) family. 15 (Hntx-3) subfamily. Monomer. Expressed by the venom gland.

The protein localises to the secreted. In terms of biological role, lethal neurotoxin. Selectively blocks tetrodotoxin-sensitive voltage-gated sodium channels (Nav). Does not affect tetrodotoxin-resistant voltage-gated sodium channels or calcium channels. This Cyriopagopus hainanus (Chinese bird spider) protein is Mu-theraphotoxin-Hhn2p.